A 769-amino-acid polypeptide reads, in one-letter code: Integrin beta-8 (769 aa).

The signal sequence occupies residues 1-42 (MCGSALAFFTAAFVCLQNDRRGPASFLWAAWVFSLVLGLGQG). At 43 to 684 (EDNRCASSNA…ECFSSPSYLR (642 aa)) the chain is on the extracellular side. The PSI domain occupies 46 to 95 (RCASSNAASCARCLALGPECGWCVQEDFISGGSRSERCDIVSNLISKGCS). 25 disulfides stabilise this stretch: Cys47-Cys65, Cys55-Cys469, Cys58-Cys83, Cys68-Cys94, Cys211-Cys218, Cys266-Cys307, Cys407-Cys419, Cys439-Cys467, Cys471-Cys491, Cys471-Cys494, Cys481-Cys494, Cys499-Cys528, Cys511-Cys526, Cys520-Cys531, Cys533-Cys546, Cys553-Cys567, Cys561-Cys572, Cys574-Cys583, Cys585-Cys609, Cys593-Cys607, Cys601-Cys612, Cys614-Cys624, Cys627-Cys630, Cys634-Cys661, and Cys640-Cys657. In terms of domain architecture, VWFA spans 146 to 384 (PVDLYYLVDV…NLVVEAYQKL (239 aa)). 2 residues coordinate Mg(2+): Asp154 and Ser156. Asp193 is a binding site for Ca(2+). N-linked (GlcNAc...) asparagine glycosylation is present at Asn233. Residues Asn249, Asp251, Pro253, and Glu254 each coordinate Ca(2+). Glu254 contacts Mg(2+). A glycan (N-linked (GlcNAc...) asparagine) is linked at Asn402. Asn421, Asn431, Asn456, and Asn466 each carry an N-linked (GlcNAc...) asparagine glycan. 4 consecutive I-EGF domains span residues 471 to 495 (CEDN…FQCD), 499 to 547 (CHFD…KYCE), 548 to 584 (KDDF…DRCQ), and 585 to 625 (CPSA…RFCE). Asn648 carries N-linked (GlcNAc...) asparagine glycosylation. A helical membrane pass occupies residues 685–704 (IFFIIFIVTFLIGLLKVLII). At 705 to 769 (RQVILQWNSN…NAHETFRCNF (65 aa)) the chain is on the cytoplasmic side.

It belongs to the integrin beta chain family. In terms of assembly, heterodimer of an alpha and a beta subunit. Beta-8 (ITGB8) associates with alpha-V (ITGAV) to form ITGAV:ITGB8. ITGAV:ITGB8 interacts with TGFB1. Placenta, kidney, brain, ovary, uterus and in several transformed cells. Transiently expressed in 293 human embryonic kidney cells.

Its subcellular location is the cell membrane. In terms of biological role, integrin alpha-V:beta-8 (ITGAV:ITGB8) is a receptor for fibronectin. It recognizes the sequence R-G-D in its ligands. Integrin alpha-V:beta-6 (ITGAV:ITGB6) mediates R-G-D-dependent release of transforming growth factor beta-1 (TGF-beta-1) from regulatory Latency-associated peptide (LAP), thereby playing a key role in TGF-beta-1 activation on the surface of activated regulatory T-cells (Tregs). Required during vasculogenesis. This chain is Integrin beta-8, found in Homo sapiens (Human).